The sequence spans 272 residues: Thiazole synthase (272 aa).

The active-site Schiff-base intermediate with DXP is Lys-111. Residues Gly-172, 198-199 (AG), and 220-221 (NS) contribute to the 1-deoxy-D-xylulose 5-phosphate site. The tract at residues 249–272 (SGRLPRRDQASASSPTTGLVQSPQ) is disordered. Residues 258-272 (ASASSPTTGLVQSPQ) show a composition bias toward polar residues.

The protein belongs to the ThiG family. As to quaternary structure, homotetramer. Forms heterodimers with either ThiH or ThiS.

Its subcellular location is the cytoplasm. The enzyme catalyses [ThiS sulfur-carrier protein]-C-terminal-Gly-aminoethanethioate + 2-iminoacetate + 1-deoxy-D-xylulose 5-phosphate = [ThiS sulfur-carrier protein]-C-terminal Gly-Gly + 2-[(2R,5Z)-2-carboxy-4-methylthiazol-5(2H)-ylidene]ethyl phosphate + 2 H2O + H(+). It participates in cofactor biosynthesis; thiamine diphosphate biosynthesis. Catalyzes the rearrangement of 1-deoxy-D-xylulose 5-phosphate (DXP) to produce the thiazole phosphate moiety of thiamine. Sulfur is provided by the thiocarboxylate moiety of the carrier protein ThiS. In vitro, sulfur can be provided by H(2)S. The polypeptide is Thiazole synthase (Synechococcus sp. (strain CC9605)).